The following is a 454-amino-acid chain: DNA-binding protein (454 aa).

Residues 1–41 are disordered; sequence MSHKKVVAISESSSDEEVPVAPPTAPPKKRQRKAVEEPRGH. Tyrosine 129 is subject to Phosphotyrosine; by host. Zn(2+)-binding residues include cysteine 213 and histidine 215. The flexible loop stretch occupies residues 226–260; that stretch reads VEMDVNSENAQRALKENPEKTKIVSNRWGRNVVQF. Residues cysteine 268, cysteine 284, cysteine 325, cysteine 327, cysteine 378, and cysteine 394 each coordinate Zn(2+). A C-terminal arm, DBP binding region spans residues 440–454; it reads TILPQGQHDDDLVLF.

This sequence belongs to the adenoviridae E2A DNA-binding protein family. In terms of assembly, homomultimerizes on viral ssDNA bound to pTP. Forms a initiation complex with viral polymerase, pTP and hosts NFIA and POU2F1/OCT1. Interacts with host SRCAP.

It localises to the host nucleus. Its function is as follows. Plays a role in the elongation phase of viral strand displacement replication by unwinding the template in an ATP-independent fashion, employing its capacity to form multimers. Also enhances the rate of initiation. Released from template upon second strand synthesis. Assembles in complex with viral pTP, viral pol, host NFIA and host POU2F1/OCT1 on viral origin of replication. Covers the whole ssDNA genome during synthesis. The complementary strand synthesis induces its relese from DNA template. May inhibit cellular transcription mediated by the interaction between host SRCAP and CBP. In Canine adenovirus serotype 1 (strain CLL) (CAdV-1), this protein is DNA-binding protein.